A 484-amino-acid polypeptide reads, in one-letter code: ATP synthase subunit beta (484 aa).

Residue G162–T169 coordinates ATP.

This sequence belongs to the ATPase alpha/beta chains family. F-type ATPases have 2 components, CF(1) - the catalytic core - and CF(0) - the membrane proton channel. CF(1) has five subunits: alpha(3), beta(3), gamma(1), delta(1), epsilon(1). CF(0) has four main subunits: a(1), b(1), b'(1) and c(9-12).

It localises to the cellular thylakoid membrane. The catalysed reaction is ATP + H2O + 4 H(+)(in) = ADP + phosphate + 5 H(+)(out). In terms of biological role, produces ATP from ADP in the presence of a proton gradient across the membrane. The catalytic sites are hosted primarily by the beta subunits. The chain is ATP synthase subunit beta from Trichodesmium erythraeum (strain IMS101).